Reading from the N-terminus, the 594-residue chain is Arginine--tRNA ligase (594 aa).

The 'HIGH' region signature appears at 133–143 (ANPTGPMNIVS).

It belongs to the class-I aminoacyl-tRNA synthetase family. In terms of assembly, monomer.

The protein localises to the cytoplasm. It carries out the reaction tRNA(Arg) + L-arginine + ATP = L-arginyl-tRNA(Arg) + AMP + diphosphate. The sequence is that of Arginine--tRNA ligase from Leptospira biflexa serovar Patoc (strain Patoc 1 / Ames).